We begin with the raw amino-acid sequence, 153 residues long: Aspartate carbamoyltransferase regulatory chain (153 aa).

Zn(2+) is bound by residues cysteine 109, cysteine 114, cysteine 138, and cysteine 141.

This sequence belongs to the PyrI family. Contains catalytic and regulatory chains. Zn(2+) is required as a cofactor.

In terms of biological role, involved in allosteric regulation of aspartate carbamoyltransferase. This chain is Aspartate carbamoyltransferase regulatory chain, found in Vibrio parahaemolyticus serotype O3:K6 (strain RIMD 2210633).